We begin with the raw amino-acid sequence, 311 residues long: HPr kinase/phosphorylase (311 aa).

Active-site residues include H139 and K160. An ATP-binding site is contributed by 154–161; the sequence is GDSGVGKS. S161 is a binding site for Mg(2+). D178 functions as the Proton acceptor; for phosphorylation activity. Proton donor; for dephosphorylation activity in the catalytic mechanism. The tract at residues 202 to 211 is important for the catalytic mechanism of both phosphorylation and dephosphorylation; it reads LEIRGIGIID. E203 provides a ligand contact to Mg(2+). The active site involves R244. Positions 265–270 are important for the catalytic mechanism of dephosphorylation; that stretch reads PVKTGR.

This sequence belongs to the HPrK/P family. Homohexamer. Mg(2+) is required as a cofactor.

The catalysed reaction is [HPr protein]-L-serine + ATP = [HPr protein]-O-phospho-L-serine + ADP + H(+). The enzyme catalyses [HPr protein]-O-phospho-L-serine + phosphate + H(+) = [HPr protein]-L-serine + diphosphate. In terms of biological role, catalyzes the ATP- as well as the pyrophosphate-dependent phosphorylation of a specific serine residue in HPr, a phosphocarrier protein of the phosphoenolpyruvate-dependent sugar phosphotransferase system (PTS). HprK/P also catalyzes the pyrophosphate-producing, inorganic phosphate-dependent dephosphorylation (phosphorolysis) of seryl-phosphorylated HPr (P-Ser-HPr). The two antagonistic activities of HprK/P are regulated by several intracellular metabolites, which change their concentration in response to the absence or presence of rapidly metabolisable carbon sources (glucose, fructose, etc.) in the growth medium. Therefore, by controlling the phosphorylation state of HPr, HPrK/P is a sensor enzyme that plays a major role in the regulation of carbon metabolism and sugar transport: it mediates carbon catabolite repression (CCR), and regulates PTS-catalyzed carbohydrate uptake and inducer exclusion. This is HPr kinase/phosphorylase from Levilactobacillus brevis (strain ATCC 367 / BCRC 12310 / CIP 105137 / JCM 1170 / LMG 11437 / NCIMB 947 / NCTC 947) (Lactobacillus brevis).